Here is a 61-residue protein sequence, read N- to C-terminus: Small ribosomal subunit protein uS14 (61 aa).

Residues cysteine 24, cysteine 27, cysteine 40, and cysteine 43 each coordinate Zn(2+).

The protein belongs to the universal ribosomal protein uS14 family. Zinc-binding uS14 subfamily. In terms of assembly, part of the 30S ribosomal subunit. Contacts proteins S3 and S10. Zn(2+) is required as a cofactor.

Functionally, binds 16S rRNA, required for the assembly of 30S particles and may also be responsible for determining the conformation of the 16S rRNA at the A site. In Geotalea uraniireducens (strain Rf4) (Geobacter uraniireducens), this protein is Small ribosomal subunit protein uS14.